A 1125-amino-acid chain; its full sequence is Kinase and exchange factor for Rac B (1125 aa).

Disordered stretches follow at residues 50–175 (VTGG…ASIN), 247–287 (SVPG…GGKF), and 322–362 (KTRD…VNSD). Residues 59 to 91 (NNQQQQQNNNNNNNNNNNNNNNNNNNNNNNNNN) show a composition bias toward low complexity. Polar residues predominate over residues 92–106 (SGEISSNNSTPSILF). Pro residues predominate over residues 113 to 124 (TAPPAPPQPTTP). Positions 137–161 (NINQQPIGGVNNNNNNNNKDSPSNK) are enriched in low complexity. Residues 380–571 (KRRQVSLQIL…KSTVDYVKEK (192 aa)) enclose the DH domain. Positions 601–822 (RYVREGMLTE…WIQAIHANII (222 aa)) constitute a PH domain. 2 disordered regions span residues 693-729 (INNMTNNDSKSKNNNNNNSNGNNNNNNINSNSNSNNN) and 761-791 (SNNNNNNNINSNNNINGNNNNGNNSVNYSNG). A compositionally biased stretch (low complexity) spans 694–729 (NNMTNNDSKSKNNNNNNSNGNNNNNNINSNSNSNNN). Residues 848-1117 (IKLCEQIGSG…QLVQKLTKML (270 aa)) enclose the Protein kinase domain. Residues 854 to 862 (IGSGGSGCT) and lysine 876 each bind ATP. Aspartate 971 (proton acceptor) is an active-site residue.

Belongs to the protein kinase superfamily. STE Ser/Thr protein kinase family. Mg(2+) serves as cofactor.

It catalyses the reaction L-seryl-[protein] + ATP = O-phospho-L-seryl-[protein] + ADP + H(+). The catalysed reaction is L-threonyl-[protein] + ATP = O-phospho-L-threonyl-[protein] + ADP + H(+). This chain is Kinase and exchange factor for Rac B, found in Dictyostelium discoideum (Social amoeba).